Consider the following 352-residue polypeptide: Leukotriene B4 receptor 1 (352 aa).

Residues 1–19 are Extracellular-facing; it reads MNTTSSAAPPSLGVEFISL. An N-linked (GlcNAc...) asparagine glycan is attached at asparagine 2. A helical transmembrane segment spans residues 20–42; it reads LAIILLSVALAVGLPGNSFVVWS. At 43 to 54 the chain is on the cytoplasmic side; sequence ILKRMQKRSVTA. The helical transmembrane segment at 55 to 75 threads the bilayer; sequence LMVLNLALADLAVLLTAPFFL. The Extracellular portion of the chain corresponds to 76 to 91; that stretch reads HFLAQGTWSFGLAGCR. The helical transmembrane segment at 92 to 113 threads the bilayer; the sequence is LCHYVCGVSMYASVLLITAMSL. Over 114–138 the chain is Cytoplasmic; the sequence is DRSLAVARPFVSQKLRTKAMARRVL. The helical transmembrane segment at 139–159 threads the bilayer; that stretch reads AGIWVLSFLLATPVLAYRTVV. Residues 160–178 lie on the Extracellular side of the membrane; the sequence is PWKTNMSLCFPRYPSEGHR. N-linked (GlcNAc...) asparagine glycosylation occurs at asparagine 164. A helical membrane pass occupies residues 179-199; the sequence is AFHLIFEAVTGFLLPFLAVVA. Residues 200–221 lie on the Cytoplasmic side of the membrane; it reads SYSDIGRRLQARRFRRSRRTGR. The chain crosses the membrane as a helical span at residues 222-242; it reads LVVLIILTFAAFWLPYHVVNL. The Extracellular segment spans residues 243 to 268; it reads AEAGRALAGQAAGLGLVGKRLSLARN. The chain crosses the membrane as a helical span at residues 269–289; the sequence is VLIALAFLSSSVNPVLYACAG. At 290–352 the chain is on the cytoplasmic side; the sequence is GGLLRSAGVG…SSPLKLNELN (63 aa). 2 stretches are compositionally biased toward polar residues: residues 310-326 and 338-352; these read SEAS…QTAR and ESLT…NELN. The disordered stretch occupies residues 310–352; that stretch reads SEASSTRRGGSLGQTARSGPAALEPGPSESLTASSPLKLNELN.

Belongs to the G-protein coupled receptor 1 family. Post-translationally, phosphorylated by GRK6 upon leukotriene B4 binding; which promotes desensitization. Expressed at highest levels in heart, skeletal muscle and at lower levels in brain and liver. High level of expression in lymphoid tissues.

Its subcellular location is the cell membrane. Receptor for extracellular ATP &gt; UTP and ADP. The activity of this receptor is mediated by G proteins which activate a phosphatidylinositol-calcium second messenger system. May be the cardiac P2Y receptor involved in the regulation of cardiac muscle contraction through modulation of L-type calcium currents. Is a receptor for leukotriene B4, a potent chemoattractant involved in inflammation and immune response. The chain is Leukotriene B4 receptor 1 (LTB4R) from Homo sapiens (Human).